The following is a 776-amino-acid chain: Ent-8-alpha-hydroxylabd-13-en-15-yl diphosphate synthase CPS4, chloroplastic (776 aa).

A chloroplast-targeting transit peptide spans 1-60; that stretch reads MSFASNATGFRIPLTTCVYPSPILRFNAKVGSGSSYGTTEAQRNMKCVDGIGRSRVVAVA. Lys226 serves as a coordination point for substrate. Positions 357 and 359 each coordinate Mg(2+). Residues 357 to 360 carry the DXDD motif motif; it reads DSDD. Position 443 (Lys443) interacts with substrate.

The protein belongs to the terpene synthase family. Mg(2+) serves as cofactor.

It is found in the plastid. Its subcellular location is the chloroplast. The enzyme catalyses ent-8alpha-hydroxylabd-13-en-15-yl diphosphate = (2E,6E,10E)-geranylgeranyl diphosphate + H2O. It participates in secondary metabolite biosynthesis; terpenoid biosynthesis. Its function is as follows. Involved in diterpenoid biosynthesis. Catalyzes the conversion of all-trans-geranylgeranyl diphosphate to ent-8alpha-hydroxylabd-13-en-15-yl diphosphate. This Salvia miltiorrhiza (Chinese sage) protein is Ent-8-alpha-hydroxylabd-13-en-15-yl diphosphate synthase CPS4, chloroplastic.